A 515-amino-acid chain; its full sequence is Protein aaim-1 (515 aa).

An N-terminal signal peptide occupies residues Met-1–Cys-16. Residues Asn-46 and Asn-127 are each glycosylated (N-linked (GlcNAc...) asparagine). The tract at residues Arg-248 to Gly-267 is disordered. Asn-447 carries an N-linked (GlcNAc...) asparagine glycan.

As to expression, expressed in the terminal bulb of the pharynx and the posterior of the intestine (at protein level). Expressed by intestinal cells and secreted into the intestinal lumen (at protein level).

It localises to the secreted. Plays a role in promoting resistance to bacterial pathogens such as P.aeruginosa by inhibiting bacterial intestinal colonization. Functionally, (Microbial infection) Promotes infection by microsporidian pathogens such as N.parisii in the early larval stages of development. Involved in ensuring the proper orientation and location of the spore proteins of N.parisii during intestinal cell invasion. This is Protein aaim-1 from Caenorhabditis elegans.